Reading from the N-terminus, the 536-residue chain is Lysosomal acid glucosylceramidase (536 aa).

The first 39 residues, 1 to 39 (MEFSSPSREECPKPSGRVNIMAGSLTGLLLLQAVSWASG), serve as a signal peptide directing secretion. 2 disulfide bridges follow: Cys43–Cys55 and Cys57–Cys62. N-linked (GlcNAc...) asparagine glycosylation is found at Asn58, Asn98, and Asn185. Glu274 (proton donor) is an active-site residue. N-linked (GlcNAc...) asparagine glycosylation is present at Asn309. Catalysis depends on Glu379, which acts as the Nucleophile. N-linked (GlcNAc...) asparagine glycosylation is present at Asn501.

It belongs to the glycosyl hydrolase 30 family. Interacts with saposin-C. Interacts with SCARB2. Interacts with TCP1. Interacts with GRN; this interaction prevents aggregation of GBA1-SCARB2 complex via interaction with HSPA1A upon stress.

The protein localises to the lysosome membrane. It carries out the reaction a beta-D-glucosyl-(1&lt;-&gt;1')-N-acylsphing-4-enine + H2O = an N-acylsphing-4-enine + D-glucose. It catalyses the reaction a beta-D-galactosyl-(1&lt;-&gt;1')-N-acylsphing-4-enine + H2O = an N-acylsphing-4-enine + D-galactose. The catalysed reaction is cholesteryl 3-beta-D-glucoside + H2O = cholesterol + D-glucose. The enzyme catalyses a beta-D-glucosyl-(1&lt;-&gt;1')-N-acylsphing-4-enine + cholesterol = cholesteryl 3-beta-D-glucoside + an N-acylsphing-4-enine. It carries out the reaction beta-D-glucosyl-N-(9Z-octadecenoyl)-sphing-4E-enine + cholesterol = N-(9Z-octadecenoyl)-sphing-4-enine + cholesteryl 3-beta-D-glucoside. It catalyses the reaction beta-D-glucosyl-N-octanoylsphing-4E-enine + cholesterol = N-octanoylsphing-4-enine + cholesteryl 3-beta-D-glucoside. The catalysed reaction is beta-D-glucosyl-N-dodecanoylsphing-4-enine + cholesterol = N-dodecanoylsphing-4-enine + cholesteryl 3-beta-D-glucoside. The enzyme catalyses beta-D-glucosyl-(1&lt;-&gt;1)-N-octadecanoylsphing-4-enine + cholesterol = N-octadecanoylsphing-4-enine + cholesteryl 3-beta-D-glucoside. It carries out the reaction beta-D-glucosyl-(1&lt;-&gt;1')-N-(15Z-tetracosenoyl)-sphing-4-enine + cholesterol = N-(15Z-tetracosenoyl)-sphing-4-enine + cholesteryl 3-beta-D-glucoside. It catalyses the reaction a beta-D-galactosyl-(1&lt;-&gt;1')-N-acylsphing-4-enine + cholesterol = cholesteryl 3-beta-D-galactoside + an N-acylsphing-4-enine. The catalysed reaction is 1-(beta-D-galactosyl)-N-dodecanoylsphing-4-enine + cholesterol = cholesteryl 3-beta-D-galactoside + N-dodecanoylsphing-4-enine. The enzyme catalyses a beta-D-xylosyl-(1&lt;-&gt;1')-N-acylsphing-4-enine + cholesterol = cholesteryl 3-beta-D-xyloside + an N-acylsphing-4-enine. It carries out the reaction beta-D-xylosyl-(1&lt;-&gt;1')-N-(9Z-octadecenoyl)-sphing-4-enine + cholesterol = cholesteryl 3-beta-D-xyloside + N-(9Z-octadecenoyl)-sphing-4-enine. It functions in the pathway steroid metabolism; cholesterol metabolism. It participates in sphingolipid metabolism. In terms of biological role, glucosylceramidase that catalyzes, within the lysosomal compartment, the hydrolysis of glucosylceramides/GlcCers (such as beta-D-glucosyl-(1&lt;-&gt;1')-N-acylsphing-4-enine) into free ceramides (such as N-acylsphing-4-enine) and glucose. Plays a central role in the degradation of complex lipids and the turnover of cellular membranes. Through the production of ceramides, participates in the PKC-activated salvage pathway of ceramide formation. Catalyzes the glucosylation of cholesterol, through a transglucosylation reaction where glucose is transferred from GlcCer to cholesterol. GlcCer containing mono-unsaturated fatty acids (such as beta-D-glucosyl-N-(9Z-octadecenoyl)-sphing-4-enine) are preferred as glucose donors for cholesterol glucosylation when compared with GlcCer containing same chain length of saturated fatty acids (such as beta-D-glucosyl-N-octadecanoyl-sphing-4-enine). Under specific conditions, may alternatively catalyze the reverse reaction, transferring glucose from cholesteryl 3-beta-D-glucoside to ceramide. Can also hydrolyze cholesteryl 3-beta-D-glucoside producing glucose and cholesterol. Catalyzes the hydrolysis of galactosylceramides/GalCers (such as beta-D-galactosyl-(1&lt;-&gt;1')-N-acylsphing-4-enine), as well as the transfer of galactose between GalCers and cholesterol in vitro, but with lower activity than with GlcCers. Contrary to GlcCer and GalCer, xylosylceramide/XylCer (such as beta-D-xyosyl-(1&lt;-&gt;1')-N-acylsphing-4-enine) is not a good substrate for hydrolysis, however it is a good xylose donor for transxylosylation activity to form cholesteryl 3-beta-D-xyloside. The protein is Lysosomal acid glucosylceramidase (GBA1) of Pongo abelii (Sumatran orangutan).